Reading from the N-terminus, the 177-residue chain is Large ribosomal subunit protein uL22 (177 aa).

The segment at 118-177 (VESRPSREGRRGGAGESAGGARARRAQGSKAAAAKKAPASSSKKAATTTEASEEAKGGSQ) is disordered. The span at 121–130 (RPSREGRRGG) shows a compositional bias: basic and acidic residues. A compositionally biased stretch (low complexity) spans 145–167 (GSKAAAAKKAPASSSKKAATTTE).

It belongs to the universal ribosomal protein uL22 family. Part of the 50S ribosomal subunit.

In terms of biological role, this protein binds specifically to 23S rRNA; its binding is stimulated by other ribosomal proteins, e.g. L4, L17, and L20. It is important during the early stages of 50S assembly. It makes multiple contacts with different domains of the 23S rRNA in the assembled 50S subunit and ribosome. Functionally, the globular domain of the protein is located near the polypeptide exit tunnel on the outside of the subunit, while an extended beta-hairpin is found that lines the wall of the exit tunnel in the center of the 70S ribosome. In Mycobacterium sp. (strain KMS), this protein is Large ribosomal subunit protein uL22.